The primary structure comprises 323 residues: Protein translocase subunit SecF (323 aa).

At 1-22 (MAQEYTVEQLNHGRKVYDFMRW) the chain is on the cytoplasmic side. Residues 23-43 (DYWAFGISGLLLIAAIVIMGV) traverse the membrane as a helical segment. At 44 to 142 (RGFNWGLDFT…FVGPSVGADL (99 aa)) the chain is on the periplasmic side. The chain crosses the membrane as a helical span at residues 143 to 163 (AQTGAMALMAALLSILVYVGF). At 164-170 (RFEWRLA) the chain is on the cytoplasmic side. A helical membrane pass occupies residues 171 to 191 (AGVVIALAHDVIITLGILSLF). The Periplasmic segment spans residues 192 to 196 (HIEID). A helical transmembrane segment spans residues 197–217 (LTIVASLMSVIGYSLNDSIVV). Residues 218 to 247 (SDRIRENFRKIRRGTPYEIFNVSLTQTLHR) are Cytoplasmic-facing. A helical transmembrane segment spans residues 248–270 (TLITSGTTLMVILMLYLFGGPVL). At 271 to 280 (EGFSLTMLIG) the chain is on the periplasmic side. A helical membrane pass occupies residues 281-301 (VSIGTASSIYVASALALKLGM). Over 302-323 (KREHMLQQKVEKEGADQPSILP) the chain is Cytoplasmic.

It belongs to the SecD/SecF family. SecF subfamily. As to quaternary structure, forms a complex with SecD. Part of the essential Sec protein translocation apparatus which comprises SecA, SecYEG and auxiliary proteins SecDF-YajC and YidC.

It localises to the cell inner membrane. Its function is as follows. Part of the Sec protein translocase complex. Interacts with the SecYEG preprotein conducting channel. SecDF uses the proton motive force (PMF) to complete protein translocation after the ATP-dependent function of SecA. The protein is Protein translocase subunit SecF of Escherichia coli O157:H7.